Here is a 192-residue protein sequence, read N- to C-terminus: FAD-linked sulfhydryl oxidase erv2 (192 aa).

Topologically, residues 1–8 (MILNRRIQ) are cytoplasmic. A helical; Signal-anchor membrane pass occupies residues 9-29 (VILPTLLILSFIIWIFHSVMV). The Lumenal segment spans residues 30–192 (DKDWRLFMPE…VINEDHDYSG (163 aa)). An ERV/ALR sulfhydryl oxidase domain is found at 61 to 162 (HDNNTNNLMV…TSCDGFNERY (102 aa)). Residues Trp74, Cys138, His141, Asn145, and Tyr162 each contribute to the FAD site. A disulfide bridge links Cys138 with Cys155.

The cofactor is FAD.

The protein localises to the endoplasmic reticulum membrane. The protein resides in the cytoplasm. It localises to the nucleus. It catalyses the reaction 2 R'C(R)SH + O2 = R'C(R)S-S(R)CR' + H2O2. Functionally, FAD-dependent sulfhydryl oxidase that catalyzes disulfide bond formation in the endoplasmic reticulum lumen. The chain is FAD-linked sulfhydryl oxidase erv2 (erv2) from Schizosaccharomyces pombe (strain 972 / ATCC 24843) (Fission yeast).